Here is a 311-residue protein sequence, read N- to C-terminus: T-cell acute lymphocytic leukemia protein 1 homolog (311 aa).

Positions 1-14 (MTMDRPPAPPPPSS) are enriched in pro residues. The tract at residues 1-67 (MTMDRPPAPP…RPSPGPPAAA (67 aa)) is disordered. A compositionally biased stretch (basic and acidic residues) spans 15 to 25 (DPRDARRHDPE). In terms of domain architecture, bHLH spans 179–231 (VRRIFTNSRERWRQQNVNGAFAELRKLIPTHPPDKKLSKNEILRLAMKYINFL). The tract at residues 265–311 (SPNSSCGSSLDGAASPDSFTEEHDTLDSKHARNLHHAILPVEGSAQR) is disordered. Basic and acidic residues predominate over residues 284-294 (TEEHDTLDSKH).

As to quaternary structure, efficient DNA binding requires dimerization with another bHLH protein. Forms heterodimers with TCF3. Phosphorylated on serine residues.

It is found in the nucleus. In terms of biological role, implicated in the genesis of hemopoietic malignancies. It may play an important role in hemopoietic differentiation. The sequence is that of T-cell acute lymphocytic leukemia protein 1 homolog (TAL1) from Gallus gallus (Chicken).